A 330-amino-acid chain; its full sequence is Phosphate acyltransferase (330 aa).

Belongs to the PlsX family. Homodimer. Probably interacts with PlsY.

Its subcellular location is the cytoplasm. The enzyme catalyses a fatty acyl-[ACP] + phosphate = an acyl phosphate + holo-[ACP]. It participates in lipid metabolism; phospholipid metabolism. Functionally, catalyzes the reversible formation of acyl-phosphate (acyl-PO(4)) from acyl-[acyl-carrier-protein] (acyl-ACP). This enzyme utilizes acyl-ACP as fatty acyl donor, but not acyl-CoA. This is Phosphate acyltransferase from Teredinibacter turnerae (strain ATCC 39867 / T7901).